We begin with the raw amino-acid sequence, 134 residues long: Ribonuclease VapC1 (134 aa).

Positions 3-132 constitute a PINc domain; the sequence is YMLDTNIIIY…RITDLQWQDW (130 aa). Residues Asp-6 and Asp-99 each coordinate Mg(2+).

The protein belongs to the PINc/VapC protein family. Mg(2+) serves as cofactor.

In terms of biological role, toxic component of a type II toxin-antitoxin (TA) system. Acts as an RNase, its toxic effect is neutralized by VapB1 antitoxin. The chain is Ribonuclease VapC1 from Haemophilus influenzae (strain ATCC 51907 / DSM 11121 / KW20 / Rd).